The following is a 273-amino-acid chain: NH(3)-dependent NAD(+) synthetase (273 aa).

Position 46–53 (46–53 (GISGGQDS)) interacts with ATP. Residue Asp52 coordinates Mg(2+). A deamido-NAD(+)-binding site is contributed by Arg139. Thr159 serves as a coordination point for ATP. Position 164 (Glu164) interacts with Mg(2+). Deamido-NAD(+) contacts are provided by Lys172 and Asp179. 2 residues coordinate ATP: Lys188 and Thr210. 259–260 (HK) provides a ligand contact to deamido-NAD(+).

It belongs to the NAD synthetase family. Homodimer.

The catalysed reaction is deamido-NAD(+) + NH4(+) + ATP = AMP + diphosphate + NAD(+) + H(+). The protein operates within cofactor biosynthesis; NAD(+) biosynthesis; NAD(+) from deamido-NAD(+) (ammonia route): step 1/1. Catalyzes the ATP-dependent amidation of deamido-NAD to form NAD. Uses ammonia as a nitrogen source. The chain is NH(3)-dependent NAD(+) synthetase from Mycobacteroides abscessus (strain ATCC 19977 / DSM 44196 / CCUG 20993 / CIP 104536 / JCM 13569 / NCTC 13031 / TMC 1543 / L948) (Mycobacterium abscessus).